Consider the following 218-residue polypeptide: Glutathione S-transferase Mu 4 (218 aa).

The region spanning 1–88 (MPMTLGYWDI…YIARKHNLCG (88 aa)) is the GST N-terminal domain. Residues 7–8 (YW), 46–50 (WLSEK), 59–60 (NL), and 72–73 (QS) each bind glutathione. One can recognise a GST C-terminal domain in the interval 90 to 208 (TEEEKIRVDI…KTSRFLRTPL (119 aa)). Tyr116 is a substrate binding site.

Belongs to the GST superfamily. Mu family. In terms of assembly, homodimer. Widely expressed.

The protein localises to the cytoplasm. The catalysed reaction is RX + glutathione = an S-substituted glutathione + a halide anion + H(+). The enzyme catalyses 1-chloro-2,4-dinitrobenzene + glutathione = 2,4-dinitrophenyl-S-glutathione + chloride + H(+). It catalyses the reaction (13S,14S)-epoxy-(4Z,7Z,9E,11E,16Z,19Z)-docosahexaenoate + glutathione = (13R)-S-glutathionyl-(14S)-hydroxy-(4Z,7Z,9E,11E,16Z,19Z)-docosahexaenoate. It carries out the reaction leukotriene C4 = leukotriene A4 + glutathione. Functionally, conjugation of reduced glutathione to a wide number of exogenous and endogenous hydrophobic electrophiles. Catalyzes the conjugation of leukotriene A4 with reduced glutathione (GSH) to form leukotriene C4. Can also catalyze the transfer of a glutathionyl group from glutathione (GSH) to 13(S),14(S)-epoxy-docosahexaenoic acid to form maresin conjugate in tissue regeneration 1 (MCTR1), a bioactive lipid mediator that possess potent anti-inflammatory and proresolving actions. The protein is Glutathione S-transferase Mu 4 of Mus musculus (Mouse).